The following is a 139-amino-acid chain: Metallothiol transferase FosB (139 aa).

The 116-residue stretch at 4 to 119 (GINHITYSVS…DGHKLELHTG (116 aa)) folds into the VOC domain. His-7, His-66, and Glu-115 together coordinate Mg(2+). The Proton donor/acceptor role is filled by Glu-115.

This sequence belongs to the fosfomycin resistance protein family. FosB subfamily. As to quaternary structure, homodimer. It depends on Mg(2+) as a cofactor.

It localises to the cytoplasm. In terms of biological role, metallothiol transferase which confers resistance to fosfomycin by catalyzing the addition of a thiol cofactor to fosfomycin. L-cysteine is probably the physiological thiol donor. This is Metallothiol transferase FosB from Staphylococcus epidermidis.